A 133-amino-acid chain; its full sequence is Fatty acid-binding protein, heart (133 aa).

Alanine 2 is modified (N-acetylalanine). Phosphothreonine is present on threonine 8. Residue tyrosine 20 is modified to Phosphotyrosine; by Tyr-kinases. Position 23 is a phosphoserine (serine 23). Phosphothreonine is present on threonine 30. Position 83 is a phosphoserine (serine 83). 127 to 129 is a binding site for (9Z)-octadecenoate; the sequence is RTY. A hexadecanoate-binding site is contributed by 127–129; that stretch reads RTY. 127-129 is a binding site for octadecanoate; the sequence is RTY.

This sequence belongs to the calycin superfamily. Fatty-acid binding protein (FABP) family.

The protein resides in the cytoplasm. Functionally, FABPs are thought to play a role in the intracellular transport of long-chain fatty acids and their acyl-CoA esters. FABPs are important elements related to the hibernating state in mammals. This is Fatty acid-binding protein, heart (FABP3) from Myotis lucifugus (Little brown bat).